Consider the following 120-residue polypeptide: uncharacterized protein (120 aa).

The helical transmembrane segment at 22–44 (ITVASCIGAAQGALFSIASALLL) threads the bilayer. Asn114 carries N-linked (GlcNAc...) asparagine glycosylation.

It localises to the membrane. This is an uncharacterized protein from Saccharomyces cerevisiae (strain ATCC 204508 / S288c) (Baker's yeast).